The chain runs to 372 residues: N-methyl-L-tryptophan oxidase (372 aa).

4–34 (DLIIIGSGSVGAAAGYYATRAGLNVLMTDAH) provides a ligand contact to FAD. Cysteine 308 carries the post-translational modification S-8alpha-FAD cysteine.

Belongs to the MSOX/MTOX family. MTOX subfamily. As to quaternary structure, monomer. The cofactor is FAD.

The enzyme catalyses N(alpha)-methyl-L-tryptophan + O2 + H2O = L-tryptophan + formaldehyde + H2O2. Functionally, catalyzes the oxidative demethylation of N-methyl-L-tryptophan. In Escherichia coli (strain SMS-3-5 / SECEC), this protein is N-methyl-L-tryptophan oxidase.